A 299-amino-acid polypeptide reads, in one-letter code: 5,10-dihydrophenazine-1-carboxylate 9-dimethylallyltransferase (299 aa).

It belongs to the aromatic prenyltransferase family.

It carries out the reaction 5,10-dihydrophenazine 1-carboxylate + dimethylallyl diphosphate = 5,10-dihydro-9-dimethylallylphenazine 1-carboxylate + diphosphate. It functions in the pathway antibiotic biosynthesis; phenazine biosynthesis. Its activity is regulated as follows. Does not require magnesium or any other divalent metal ions for activity. In terms of biological role, involved in the biosynthesis of prenylated phenazines. Catalyzes the transfer of a dimethylallyl moiety to C-9 of 5,10-dihydrophenazine 1-carboxylate (dihydro-PCA). Specific for both dimethylallyl diphosphate and dihydro-PCA. This is 5,10-dihydrophenazine-1-carboxylate 9-dimethylallyltransferase from Streptomyces anulatus (Streptomyces chrysomallus).